A 173-amino-acid chain; its full sequence is Peptide deformylase (173 aa).

Fe cation contacts are provided by Cys-91 and His-133. Glu-134 is an active-site residue. His-137 is a binding site for Fe cation.

The protein belongs to the polypeptide deformylase family. The cofactor is Fe(2+).

It carries out the reaction N-terminal N-formyl-L-methionyl-[peptide] + H2O = N-terminal L-methionyl-[peptide] + formate. Its function is as follows. Removes the formyl group from the N-terminal Met of newly synthesized proteins. Requires at least a dipeptide for an efficient rate of reaction. N-terminal L-methionine is a prerequisite for activity but the enzyme has broad specificity at other positions. This is Peptide deformylase from Buchnera aphidicola subsp. Acyrthosiphon pisum (strain 5A).